The following is a 792-amino-acid chain: Probable G-protein coupled receptor 156 (792 aa).

The Extracellular segment spans residues 1-49 (MEPEINCSEFCDSFPGQELDRRPLHDLCKTTITDSQHGSADISPLSPAL). N6 carries an N-linked (GlcNAc...) asparagine glycan. Residues 50 to 70 (LGVIWTFLSCGLLLVLFFLAF) form a helical membrane-spanning segment. The Cytoplasmic segment spans residues 71–86 (TIRCRKNRIVKMSSPN). Residues 87–107 (LNIVTLLGSCLTYSSAYLFGI) form a helical membrane-spanning segment. The Extracellular segment spans residues 108-118 (QDALVGSSVEA). The helical transmembrane segment at 119–139 (LIQTRLSLLCIGTTLVFGPIL) threads the bilayer. Residues 140-164 (GKSWRLYKVFTQRVPDKRVIIKDLQ) lie on the Cytoplasmic side of the membrane. The chain crosses the membrane as a helical span at residues 165-185 (LLGLVAALVVADVILLVTWVL). Topologically, residues 186-222 (TDPIQCLQILGVSMKVTGRDVSCSLTNTHFCASRYSD) are extracellular. Residues 223–243 (VWIALVLGCKGLLLLYGAYLA) form a helical membrane-spanning segment. The Cytoplasmic portion of the chain corresponds to 244-257 (GLTNHVSSPPVNQS). A helical transmembrane segment spans residues 258-278 (LTIMVGVNLLLLTAGLLFVVT). At 279 to 287 (RYLHSWPNL) the chain is on the extracellular side. Residues 288–308 (VFGLTSGGIFVCTTTVNCCVF) form a helical membrane-spanning segment. Topologically, residues 309–792 (LPQLRQRKAF…FKDDLKPTLV (484 aa)) are cytoplasmic. Residues 354–390 (EXSCMERLLTEKNAVIESLQEQVSNAKEKLVKLMSAE) are a coiled coil. Disordered regions lie at residues 407 to 457 (GGPA…KYDM), 469 to 516 (GCSQ…EVLP), and 538 to 704 (DLGT…QRQP). The segment covering 422-434 (AAAEDSLPASAAS) has biased composition (low complexity). Composition is skewed to basic and acidic residues over residues 443–457 (SRRD…KYDM) and 474–486 (PKAE…ERGN). The segment covering 554 to 567 (PWKSNTSGSPQKLS) has biased composition (polar residues). The span at 578–589 (VRRRRAAQRARS) shows a compositional bias: basic residues. Polar residues predominate over residues 602 to 619 (QANNTVSGSQNGLIVQNR). Residues 620-635 (DSPRLDHHNARSKEPR) are compositionally biased toward basic and acidic residues. Residues 675-704 (PRQPSASAPAQSSTAPCLSSXPALPRQRQP) are compositionally biased toward low complexity.

Belongs to the G-protein coupled receptor 3 family. GABA-B receptor subfamily. As to expression, widely expressed throughout the brain and is particularly dense in the olfactory tubercles, islands of Calleja, nucleus accumbens, piriform cortex and all fields of the hippocampus.

It is found in the cell membrane. Its function is as follows. Orphan G-protein coupled receptor involved in the regulation of hair cell orientation in mechanosensory organs of the inner ear. It is required to trigger a 180 degree reversal in hair cell orientation, creating a virtual line of polarity reversal (LPR) across which stereociliary bundles are arranged in opposite orientations. In Rattus norvegicus (Rat), this protein is Probable G-protein coupled receptor 156 (Gpr156).